The chain runs to 309 residues: ATP synthase gamma chain (309 aa).

Belongs to the ATPase gamma chain family. F-type ATPases have 2 components, CF(1) - the catalytic core - and CF(0) - the membrane proton channel. CF(1) has five subunits: alpha(3), beta(3), gamma(1), delta(1), epsilon(1). CF(0) has three main subunits: a, b and c.

The protein resides in the cell membrane. In terms of biological role, produces ATP from ADP in the presence of a proton gradient across the membrane. The gamma chain is believed to be important in regulating ATPase activity and the flow of protons through the CF(0) complex. This Ligilactobacillus salivarius (strain UCC118) (Lactobacillus salivarius) protein is ATP synthase gamma chain.